A 417-amino-acid chain; its full sequence is NADH-quinone oxidoreductase subunit D (417 aa).

Belongs to the complex I 49 kDa subunit family. As to quaternary structure, NDH-1 is composed of 14 different subunits. Subunits NuoB, C, D, E, F, and G constitute the peripheral sector of the complex.

It is found in the cell inner membrane. It catalyses the reaction a quinone + NADH + 5 H(+)(in) = a quinol + NAD(+) + 4 H(+)(out). In terms of biological role, NDH-1 shuttles electrons from NADH, via FMN and iron-sulfur (Fe-S) centers, to quinones in the respiratory chain. The immediate electron acceptor for the enzyme in this species is believed to be ubiquinone. Couples the redox reaction to proton translocation (for every two electrons transferred, four hydrogen ions are translocated across the cytoplasmic membrane), and thus conserves the redox energy in a proton gradient. The sequence is that of NADH-quinone oxidoreductase subunit D from Nitrosomonas europaea (strain ATCC 19718 / CIP 103999 / KCTC 2705 / NBRC 14298).